The following is a 412-amino-acid chain: Potassium channel, subfamily K, member 13 (412 aa).

At 1–21 (MACRSGCCCNSIGSFNEDNAR) the chain is on the cytoplasmic side. Residues 22–42 (FLMLALLIIIYLLCGAAVFSA) form a helical membrane-spanning segment. Residues 97–117 (WDFAGAFYFVGTVVSTIGFGM) constitute an intramembrane region (pore-forming). K(+) contacts are provided by Thr-112, Ile-113, and Gly-114. Residues 112 to 117 (TIGFGM) are selectivity filter 1. A helical membrane pass occupies residues 127–147 (IFLIFYGLIGCAATILFFNLF). Over 148-198 (LERVITVIAFVLKFCHERRESRKAGPTQNCRRPSTDNRDRRTDSLAGWKPS) the chain is Cytoplasmic. Residues 199–219 (VYCVMLILGVAAILVSCCASA) form a helical membrane-spanning segment. Positions 229-249 (YLDALYFCFVAFSTIGFGDMV) form an intramembrane region, pore-forming. Thr-242, Ile-243, Gly-244, and Phe-245 together coordinate K(+). Residues 242–247 (TIGFGD) are selectivity filter 2. The chain crosses the membrane as a helical span at residues 268–288 (LFILTGVCCIYSLFNVISIVI). Topologically, residues 289 to 412 (KQVLNWLLRR…NRLAETSVDR (124 aa)) are cytoplasmic. Residues 374–386 (MANGHPRQSGSSS) show a composition bias toward polar residues. The interval 374-395 (MANGHPRQSGSSSRHNEFSGGV) is disordered.

The protein belongs to the two pore domain potassium channel (TC 1.A.1.8) family. In terms of assembly, homodimer. Heterodimer. In terms of tissue distribution, brain and heart.

Its subcellular location is the cell membrane. The enzyme catalyses K(+)(in) = K(+)(out). Its activity is regulated as follows. The channel conductance is activated by arachidonic acid and inhibited by Ba(2+) ions, volatile anesthetics such as halothane and antiarrhythmic drug mexiletine. Insensitive to extracellular pH change. Functionally, k(+) channel that conducts outward rectifying tonic currents potentiated by purinergic signals. Homo- and heterodimerizes to form functional channels with distinct regulatory and gating properties. Contributes most of K(+) currents at the plasma membrane of resting microglia. Maintains a depolarized membrane potential required for proper ramified microglia morphology and phagocytosis, selectively mediating microglial pruning of presynaptic compartments at hippocampal excitatory synapses. Upon local release of ATP caused by neuronal injury or infection, it is potentiated by purinergic signaling and contributes to ATP-triggered K(+) efflux underlying microglial NLRP3 inflammasome assembly and IL1B release. This chain is Potassium channel, subfamily K, member 13, found in Danio rerio (Zebrafish).